The following is a 148-amino-acid chain: Caltractin (148 aa).

4 EF-hand domains span residues 4–39 (EQKQDIREAFDLFDTDGSGTIDAKELKVAMRALGFE), 40–75 (PKKEEIKKMIADIDKDGSGTIDFEEFLQMMTAKMGE), 77–112 (DSREEIMKAFRLFDDDETGKISFKNLKRVAKELGEN), and 113–148 (MTDEELQEMIDEADRDGDGEVNEEEFFRIMKKTSLF). Ca(2+)-binding residues include D17, D19, S21, T23, E28, D53, D55, S57, T59, and E64. D126, D128, D130, E132, and E137 together coordinate Ca(2+).

The protein belongs to the centrin family. Ubiquitous.

In terms of biological role, this calcium-binding protein is found in the basal body complexes (the functional homolog of the centrosome in animal cell). In mitotic cells it is specifically associated with the poles of the mitotic spindles at the sites of the duplicated basal body complexes. This Tetraselmis striata (Green microalga) protein is Caltractin.